Consider the following 284-residue polypeptide: Deoxyribonuclease-1 (284 aa).

Positions 1 to 22 (MRYTGLMGILLTLVNLLQLAAT) are cleaved as a signal peptide. N40 carries an N-linked (GlcNAc...) asparagine glycan. The active site involves E100. Residues C123 and C126 are joined by a disulfide bond. N-linked (GlcNAc...) asparagine glycosylation occurs at N128. H156 is a catalytic residue. Residues C195 and C231 are joined by a disulfide bond.

Belongs to the DNase I family. The cofactor is Ca(2+). Requires Mg(2+) as cofactor.

It localises to the secreted. Its subcellular location is the zymogen granule. The protein resides in the nucleus envelope. The catalysed reaction is Endonucleolytic cleavage to 5'-phosphodinucleotide and 5'-phosphooligonucleotide end-products.. Functionally, serum endocuclease secreted into body fluids by a wide variety of exocrine and endocrine organs. Expressed by non-hematopoietic tissues and preferentially cleaves protein-free DNA. Among other functions, seems to be involved in cell death by apoptosis. Binds specifically to G-actin and blocks actin polymerization. Together with DNASE1L3, plays a key role in degrading neutrophil extracellular traps (NETs). NETs are mainly composed of DNA fibers and are released by neutrophils to bind pathogens during inflammation. Degradation of intravascular NETs by DNASE1 and DNASE1L3 is required to prevent formation of clots that obstruct blood vessels and cause organ damage following inflammation. This Rattus norvegicus (Rat) protein is Deoxyribonuclease-1 (Dnase1).